A 104-amino-acid polypeptide reads, in one-letter code: Large ribosomal subunit protein uL24 (104 aa).

The protein belongs to the universal ribosomal protein uL24 family. As to quaternary structure, part of the 50S ribosomal subunit.

One of two assembly initiator proteins, it binds directly to the 5'-end of the 23S rRNA, where it nucleates assembly of the 50S subunit. In terms of biological role, one of the proteins that surrounds the polypeptide exit tunnel on the outside of the subunit. The protein is Large ribosomal subunit protein uL24 of Colwellia psychrerythraea (strain 34H / ATCC BAA-681) (Vibrio psychroerythus).